Here is a 434-residue protein sequence, read N- to C-terminus: Glycoprotein U20 (434 aa).

The N-terminal stretch at methionine 1 to serine 15 is a signal peptide. A helical membrane pass occupies residues leucine 322–threonine 342.

Its subcellular location is the host endoplasmic reticulum membrane. It is found in the host lysosome membrane. Its function is as follows. Plays a role in the down-regulation of the host stress-induced NKG2D ligand UBPL1, which enables immune cells expressing the NKG2D receptor to recognize and annihilate infected cells prior to viral spread. The protein is Glycoprotein U20 (U20) of Human herpesvirus 6B (strain Z29) (HHV-6 variant B).